The sequence spans 577 residues: Phosphoenolpyruvate-protein phosphotransferase (577 aa).

The Tele-phosphohistidine intermediate role is filled by H191. The phosphoenolpyruvate site is built by R298 and R334. Mg(2+) contacts are provided by E435 and D459. Phosphoenolpyruvate is bound by residues N458–D459 and R469. C506 serves as the catalytic Proton donor.

This sequence belongs to the PEP-utilizing enzyme family. In terms of assembly, homodimer. Mg(2+) serves as cofactor.

It localises to the cytoplasm. The catalysed reaction is L-histidyl-[protein] + phosphoenolpyruvate = N(pros)-phospho-L-histidyl-[protein] + pyruvate. In terms of biological role, general (non sugar-specific) component of the phosphoenolpyruvate-dependent sugar phosphotransferase system (sugar PTS). This major carbohydrate active-transport system catalyzes the phosphorylation of incoming sugar substrates concomitantly with their translocation across the cell membrane. Enzyme I transfers the phosphoryl group from phosphoenolpyruvate (PEP) to the phosphoryl carrier protein (HPr). This chain is Phosphoenolpyruvate-protein phosphotransferase (ptsI), found in Streptococcus equinus (Streptococcus bovis).